Consider the following 544-residue polypeptide: Probable protein kinase UbiB (544 aa).

One can recognise a Protein kinase domain in the interval 123-501 (DFDLVPLASA…KRQQATGKFL (379 aa)). Residues 129-137 (LASASIAQV) and Lys152 contribute to the ATP site. The active-site Proton acceptor is the Asp287. The next 2 membrane-spanning stretches (helical) occupy residues 496–516 (ATGKFLFGVGATLVVCSAILV) and 519–539 (TYEQLSLATAIAGVTFWLFSW).

The protein belongs to the ABC1 family. UbiB subfamily.

It localises to the cell inner membrane. Its pathway is cofactor biosynthesis; ubiquinone biosynthesis [regulation]. Its function is as follows. Is probably a protein kinase regulator of UbiI activity which is involved in aerobic coenzyme Q (ubiquinone) biosynthesis. This is Probable protein kinase UbiB from Vibrio vulnificus (strain CMCP6).